A 343-amino-acid polypeptide reads, in one-letter code: MTITPQEALQRTIEHREIFHDEMLHLMRLIMRGDMSPVMAAAIITGLRVKKETIGEIAAAATVMREFANHVEVQDNSNFVDIVGTGGDGSHTFNISTASMFIAAAAGAKVAKHGNRGVSSKSGSADVLDALGVNIDLQPDQVAASIAETGMGFMFAPNHHPAMKNIAAVRRELGVRTIFNILGPLTNPAGAPNQLMGVFHPDLVGIQVRVMQRLGAQHVLVVYGKDGMDEVSLGAATLVGELRDGQVHEYEIHPEDFGLQMVSNRTLKVENAEESRTMLLGALDNQPGVAREIVTLNAGTALYAANIAESIADGIQLAREAIASGKARAKVDELVRFTQQFKR.

Residues Gly84, 87–88 (GD), Thr92, 94–97 (NIST), 112–120 (KHGNRGVSS), and Ser124 contribute to the 5-phospho-alpha-D-ribose 1-diphosphate site. Gly84 is an anthranilate binding site. Ser96 is a binding site for Mg(2+). Asn115 provides a ligand contact to anthranilate. Arg170 is a binding site for anthranilate. Asp229 and Glu230 together coordinate Mg(2+).

Belongs to the anthranilate phosphoribosyltransferase family. In terms of assembly, homodimer. Requires Mg(2+) as cofactor.

It catalyses the reaction N-(5-phospho-beta-D-ribosyl)anthranilate + diphosphate = 5-phospho-alpha-D-ribose 1-diphosphate + anthranilate. It participates in amino-acid biosynthesis; L-tryptophan biosynthesis; L-tryptophan from chorismate: step 2/5. In terms of biological role, catalyzes the transfer of the phosphoribosyl group of 5-phosphorylribose-1-pyrophosphate (PRPP) to anthranilate to yield N-(5'-phosphoribosyl)-anthranilate (PRA). This chain is Anthranilate phosphoribosyltransferase, found in Burkholderia ambifaria (strain MC40-6).